A 194-amino-acid polypeptide reads, in one-letter code: Small ribosomal subunit protein uS7 (194 aa).

This sequence belongs to the universal ribosomal protein uS7 family. In terms of assembly, part of the 30S ribosomal subunit.

Functionally, one of the primary rRNA binding proteins, it binds directly to 16S rRNA where it nucleates assembly of the head domain of the 30S subunit. Is located at the subunit interface close to the decoding center. This chain is Small ribosomal subunit protein uS7, found in Archaeoglobus fulgidus (strain ATCC 49558 / DSM 4304 / JCM 9628 / NBRC 100126 / VC-16).